The following is a 185-amino-acid chain: Ribosome-recycling factor (185 aa).

The protein belongs to the RRF family.

The protein resides in the cytoplasm. In terms of biological role, responsible for the release of ribosomes from messenger RNA at the termination of protein biosynthesis. May increase the efficiency of translation by recycling ribosomes from one round of translation to another. This is Ribosome-recycling factor from Pseudomonas entomophila (strain L48).